The primary structure comprises 574 residues: Septation ring formation regulator EzrA (574 aa).

The Extracellular segment spans residues 1–7 (MSSGIIL). Residues 8–26 (LIVAIVLLVIIAYLVGVII) form a helical membrane-spanning segment. Over 27 to 574 (RKRNDTLITS…YEKTRERIRF (548 aa)) the chain is Cytoplasmic. Coiled-coil stretches lie at residues 102–131 (NFIR…REAL), 161–190 (ENED…FVAL), 276–379 (VTLD…QQEK), and 459–493 (QLEA…NLEE).

Belongs to the EzrA family.

It localises to the cell membrane. In terms of biological role, negative regulator of FtsZ ring formation; modulates the frequency and position of FtsZ ring formation. Inhibits FtsZ ring formation at polar sites. Interacts either with FtsZ or with one of its binding partners to promote depolymerization. The chain is Septation ring formation regulator EzrA from Streptococcus equi subsp. zooepidemicus (strain H70).